The chain runs to 408 residues: Beta-ureidopropionase (408 aa).

The region spanning 90–360 is the CN hydrolase domain; the sequence is VRVGLIQNSI…DGLLISDMDL (271 aa). The active-site Proton acceptor is the Glu137. The Proton donor role is filled by Lys212. Catalysis depends on Cys249, which acts as the Nucleophile.

It belongs to the carbon-nitrogen hydrolase superfamily. BUP family. Homodimer, homotetramer, homooctamer; can also form higher homooligomers.

The protein resides in the cytoplasm. The enzyme catalyses 3-(carbamoylamino)propanoate + H2O + 2 H(+) = beta-alanine + NH4(+) + CO2. It carries out the reaction 3-(carbamoylamino)-2-methylpropanoate + H2O + 2 H(+) = (R)-3-amino-2-methylpropanoate + NH4(+) + CO2. Its pathway is amino-acid biosynthesis; beta-alanine biosynthesis. In terms of biological role, catalyzes a late step in pyrimidine degradation. Converts N-carbamoyl-beta-aminoisobutyrate and N-carbamoyl-beta-alanine (3-ureidopropanoate) to, respectively, beta-aminoisobutyrate and beta-alanine, ammonia and carbon dioxide. Involved in the recycling of nitrogen from nucleobases to general nitrogen metabolism. This is Beta-ureidopropionase from Arabidopsis thaliana (Mouse-ear cress).